Reading from the N-terminus, the 336-residue chain is Transcription initiation factor IIB (336 aa).

The TFIIB-type zinc-finger motif lies at 41-72 (QKLRCPICGNTVFIEDAERGQIVCASCGYVLM). Zn(2+) contacts are provided by Cys45, Cys48, Cys64, and Cys67. A run of 2 repeats spans residues 152 to 235 (HELN…AREL) and 246 to 327 (QYVP…ELAK).

Belongs to the TFIIB family.

Stabilizes TBP binding to an archaeal box-A promoter. Also responsible for recruiting RNA polymerase II to the pre-initiation complex (DNA-TBP-TFIIB). This chain is Transcription initiation factor IIB, found in Caldivirga maquilingensis (strain ATCC 700844 / DSM 13496 / JCM 10307 / IC-167).